The sequence spans 83 residues: Mitochondrial import inner membrane translocase subunit Tim8 B (83 aa).

The residue at position 2 (Ala2) is an N-acetylalanine. Positions 36–59 match the Twin CX3C motif motif; sequence CWDKCVEKPGSRLDSRTENCLSSC. 2 disulfides stabilise this stretch: Cys36/Cys59 and Cys40/Cys55.

The protein belongs to the small Tim family. Heterohexamer; possibly composed of 3 copies of TIMM8B and 3 copies of TIMM13, named soluble 70 kDa complex. Associates with the TIM22 complex, whose core is composed of TIMM22.

It is found in the mitochondrion inner membrane. In terms of biological role, probable mitochondrial intermembrane chaperone that participates in the import and insertion of some multi-pass transmembrane proteins into the mitochondrial inner membrane. Also required for the transfer of beta-barrel precursors from the TOM complex to the sorting and assembly machinery (SAM complex) of the outer membrane. Acts as a chaperone-like protein that protects the hydrophobic precursors from aggregation and guide them through the mitochondrial intermembrane space. The polypeptide is Mitochondrial import inner membrane translocase subunit Tim8 B (Timm8b) (Mus musculus (Mouse)).